A 1366-amino-acid chain; its full sequence is DNA-directed RNA polymerase subunit beta (1366 aa).

This sequence belongs to the RNA polymerase beta chain family. As to quaternary structure, the RNAP catalytic core consists of 2 alpha, 1 beta, 1 beta' and 1 omega subunit. When a sigma factor is associated with the core the holoenzyme is formed, which can initiate transcription.

It catalyses the reaction RNA(n) + a ribonucleoside 5'-triphosphate = RNA(n+1) + diphosphate. Its function is as follows. DNA-dependent RNA polymerase catalyzes the transcription of DNA into RNA using the four ribonucleoside triphosphates as substrates. This is DNA-directed RNA polymerase subunit beta from Marinomonas sp. (strain MWYL1).